A 122-amino-acid chain; its full sequence is Acidic phospholipase A2 2 (122 aa).

Cystine bridges form between cysteine 26/cysteine 115, cysteine 28/cysteine 44, cysteine 43/cysteine 95, cysteine 49/cysteine 122, cysteine 50/cysteine 88, cysteine 57/cysteine 81, and cysteine 75/cysteine 86. Ca(2+) is bound by residues tyrosine 27, glycine 29, and glycine 31. The active site involves histidine 47. Residue aspartate 48 coordinates Ca(2+). The active site involves aspartate 89.

It belongs to the phospholipase A2 family. Group II subfamily. D49 sub-subfamily. Ca(2+) is required as a cofactor. Expressed by the venom gland.

It is found in the secreted. The enzyme catalyses a 1,2-diacyl-sn-glycero-3-phosphocholine + H2O = a 1-acyl-sn-glycero-3-phosphocholine + a fatty acid + H(+). In terms of biological role, snake venom phospholipase A2 (PLA2) that has high lipolytic activity. PLA2 catalyzes the calcium-dependent hydrolysis of the 2-acyl groups in 3-sn-phosphoglycerides. The protein is Acidic phospholipase A2 2 of Craspedocephalus gramineus (Bamboo pit viper).